The chain runs to 1122 residues: Histidine kinase CKI1 (1122 aa).

The Cytoplasmic segment spans residues 1–12 (MMVKVTKLVASR). The chain crosses the membrane as a helical span at residues 13–33 (PIVVFCVLAFLVVVFECIWIS). The Extracellular portion of the chain corresponds to 34–345 (NWRTTTENLV…KHQAEKAKYQ (312 aa)). A helical membrane pass occupies residues 346 to 366 (LIVVMIFLGFGWPVWFVWFMM). The Cytoplasmic portion of the chain corresponds to 367-1122 (QATRREMHMR…VIREIESKRH (756 aa)). The Histidine kinase domain occupies 402-671 (NASHDIRGAL…CFQFNVLLTT (270 aa)). The residue at position 405 (His405) is a Phosphohistidine; by autocatalysis. The span at 918–928 (AERSPKHKVQE) shows a compositional bias: basic and acidic residues. A disordered region spans residues 918–981 (AERSPKHKVQ…QETSKPSDDE (64 aa)). In terms of domain architecture, Response regulatory spans 987–1120 (RVLVVDDNFI…ANVIREIESK (134 aa)). Residue Asp1050 is modified to 4-aspartylphosphate.

In terms of assembly, homodimer. Interacts with AHP2 and AHP3. In terms of tissue distribution, expressed in vascular tissues of inflorescence stems and floral organs, especially in procambium cells, and in siliques.

It localises to the cell membrane. It catalyses the reaction ATP + protein L-histidine = ADP + protein N-phospho-L-histidine.. In terms of biological role, essential protein. Functions as a histidine kinase and transmits the stress signal to a downstream MAPK cascade. This protein undergoes an ATP-dependent autophosphorylation at a conserved histidine residue in the kinase core, and a phosphoryl group is then transferred to a conserved aspartate residue in the receiver domain. Required for the development of megagametophyte in female gametophyte (embryo sac) independently of cytokinin. Contributes to vascular bundle formation and secondary growth in a cytokinin-independent manner, probably by promoting the maintenance of mitotic activity and/or identity of procambial cells. Seems to influence and promote the cytokinin signaling pathway. The chain is Histidine kinase CKI1 (CKI1) from Arabidopsis thaliana (Mouse-ear cress).